A 103-amino-acid polypeptide reads, in one-letter code: Large ribosomal subunit protein bL21 (103 aa).

It belongs to the bacterial ribosomal protein bL21 family. As to quaternary structure, part of the 50S ribosomal subunit. Contacts protein L20.

Functionally, this protein binds to 23S rRNA in the presence of protein L20. This is Large ribosomal subunit protein bL21 from Lactobacillus delbrueckii subsp. bulgaricus (strain ATCC 11842 / DSM 20081 / BCRC 10696 / JCM 1002 / NBRC 13953 / NCIMB 11778 / NCTC 12712 / WDCM 00102 / Lb 14).